We begin with the raw amino-acid sequence, 196 residues long: Imidazoleglycerol-phosphate dehydratase (196 aa).

This sequence belongs to the imidazoleglycerol-phosphate dehydratase family.

Its subcellular location is the cytoplasm. The catalysed reaction is D-erythro-1-(imidazol-4-yl)glycerol 3-phosphate = 3-(imidazol-4-yl)-2-oxopropyl phosphate + H2O. It functions in the pathway amino-acid biosynthesis; L-histidine biosynthesis; L-histidine from 5-phospho-alpha-D-ribose 1-diphosphate: step 6/9. This chain is Imidazoleglycerol-phosphate dehydratase, found in Ralstonia nicotianae (strain ATCC BAA-1114 / GMI1000) (Ralstonia solanacearum).